Consider the following 498-residue polypeptide: UDP-N-acetylmuramoylalanine--D-glutamate ligase (498 aa).

119 to 125 provides a ligand contact to ATP; it reads GTNGKST.

The protein belongs to the MurCDEF family.

It is found in the cytoplasm. It catalyses the reaction UDP-N-acetyl-alpha-D-muramoyl-L-alanine + D-glutamate + ATP = UDP-N-acetyl-alpha-D-muramoyl-L-alanyl-D-glutamate + ADP + phosphate + H(+). The protein operates within cell wall biogenesis; peptidoglycan biosynthesis. Cell wall formation. Catalyzes the addition of glutamate to the nucleotide precursor UDP-N-acetylmuramoyl-L-alanine (UMA). The protein is UDP-N-acetylmuramoylalanine--D-glutamate ligase of Wolbachia sp. subsp. Brugia malayi (strain TRS).